The primary structure comprises 723 residues: Catalase-peroxidase (723 aa).

The signal sequence occupies residues 1-29 (MDGNDLVENKCPVMHGGITVAGHSNTAWW). Positions 97–225 (WHSAGSYRLA…LAAVQMGLIY (129 aa)) form a cross-link, tryptophyl-tyrosyl-methioninium (Trp-Tyr) (with M-251). H98 functions as the Proton acceptor in the catalytic mechanism. Positions 225–251 (YVNPEGVNGKSDPLKSAAQVRETFARM) form a cross-link, tryptophyl-tyrosyl-methioninium (Tyr-Met) (with W-97). H266 lines the heme b pocket.

This sequence belongs to the peroxidase family. Peroxidase/catalase subfamily. In terms of assembly, homodimer or homotetramer. Requires heme b as cofactor. Post-translationally, formation of the three residue Trp-Tyr-Met cross-link is important for the catalase, but not the peroxidase activity of the enzyme.

The enzyme catalyses H2O2 + AH2 = A + 2 H2O. It catalyses the reaction 2 H2O2 = O2 + 2 H2O. In terms of biological role, bifunctional enzyme with both catalase and broad-spectrum peroxidase activity. In Hyphomonas neptunium (strain ATCC 15444), this protein is Catalase-peroxidase.